Consider the following 160-residue polypeptide: Ribosomal RNA large subunit methyltransferase H (160 aa).

S-adenosyl-L-methionine is bound by residues Gly-108 and 127–132 (FGKMTW).

It belongs to the RNA methyltransferase RlmH family. In terms of assembly, homodimer.

The protein resides in the cytoplasm. The enzyme catalyses pseudouridine(1915) in 23S rRNA + S-adenosyl-L-methionine = N(3)-methylpseudouridine(1915) in 23S rRNA + S-adenosyl-L-homocysteine + H(+). Its function is as follows. Specifically methylates the pseudouridine at position 1915 (m3Psi1915) in 23S rRNA. The sequence is that of Ribosomal RNA large subunit methyltransferase H from Beijerinckia indica subsp. indica (strain ATCC 9039 / DSM 1715 / NCIMB 8712).